The following is a 295-amino-acid chain: Phosphoribosylaminoimidazole-succinocarboxamide synthase (295 aa).

It belongs to the SAICAR synthetase family.

The enzyme catalyses 5-amino-1-(5-phospho-D-ribosyl)imidazole-4-carboxylate + L-aspartate + ATP = (2S)-2-[5-amino-1-(5-phospho-beta-D-ribosyl)imidazole-4-carboxamido]succinate + ADP + phosphate + 2 H(+). It functions in the pathway purine metabolism; IMP biosynthesis via de novo pathway; 5-amino-1-(5-phospho-D-ribosyl)imidazole-4-carboxamide from 5-amino-1-(5-phospho-D-ribosyl)imidazole-4-carboxylate: step 1/2. This chain is Phosphoribosylaminoimidazole-succinocarboxamide synthase, found in Halorhodospira halophila (strain DSM 244 / SL1) (Ectothiorhodospira halophila (strain DSM 244 / SL1)).